A 443-amino-acid chain; its full sequence is Phosphoglucosamine mutase (443 aa).

Ser102 functions as the Phosphoserine intermediate in the catalytic mechanism. Mg(2+) is bound by residues Ser102, Asp241, Asp243, and Asp245. Ser102 carries the post-translational modification Phosphoserine.

This sequence belongs to the phosphohexose mutase family. The cofactor is Mg(2+). Activated by phosphorylation.

The enzyme catalyses alpha-D-glucosamine 1-phosphate = D-glucosamine 6-phosphate. Its function is as follows. Catalyzes the conversion of glucosamine-6-phosphate to glucosamine-1-phosphate. The protein is Phosphoglucosamine mutase of Acinetobacter baylyi (strain ATCC 33305 / BD413 / ADP1).